Reading from the N-terminus, the 172-residue chain is Podoplanin (172 aa).

An N-terminal signal peptide occupies residues 1-22; it reads MWTVPVLFWVLGSVWFWDSAQG. Over 23–141 the chain is Extracellular; that stretch reads GTIGVNEDDI…KKDGLPVVTL (119 aa). Residues Thr37, Thr51, Thr52, Thr53, and Thr56 are each glycosylated (O-linked (GalNAc...) threonine). Residues 49–132 form a disordered region; sequence KITTTGATGG…AGDETQTTDK (84 aa). Polar residues predominate over residues 51–63; that stretch reads TTTGATGGLNEST. An N-linked (GlcNAc...) asparagine glycan is attached at Asn60. Residues Thr63, Thr71, and Thr77 are each glycosylated (O-linked (GalNAc...) threonine). Over residues 72-81 the composition is skewed to basic and acidic residues; the sequence is QRERGTKPPL. O-linked (GalNAc...) serine glycosylation occurs at Ser85. A glycan (O-linked (GalNAc...) threonine) is linked at Thr86. Ser87 carries an O-linked (GalNAc...) serine glycan. The O-linked (GalNAc...) threonine glycan is linked to Thr89. Ser90 carries O-linked (GalNAc...) serine glycosylation. The span at 90 to 99 shows a compositional bias: basic and acidic residues; that stretch reads SDHDHREHES. Residues Thr100, Thr101, Thr102, Thr107, and Thr115 are each glycosylated (O-linked (GalNAc...) threonine). The span at 100–109 shows a compositional bias: low complexity; the sequence is TTTVKVVTSH. Basic and acidic residues predominate over residues 110–132; the sequence is SVDKKTSHPNRDNAGDETQTTDK. A helical transmembrane segment spans residues 142 to 162; the sequence is VGIIVGVLLAIGFVGGIFIVV. Residues 143–147 are requires for dimerization and lipidd rafts association; sequence GIIVG. At 163–172 the chain is on the cytoplasmic side; the sequence is MKKISGRFSP. Positions 164 to 165 are requires for interaction with MSN and EZR; that stretch reads KK.

It belongs to the podoplanin family. In terms of assembly, homodimer. Interacts with CLEC1B; the interaction is independent of CLEC1B glycosylation and activates CLEC1B; the interaction is dependent of sialic acid on O-glycans. Interacts with CD9; this interaction is homophilic and attenuates platelet aggregation and pulmonary metastasis induced by PDPN. Interacts with LGALS8; the interaction is glycosylation-dependent; may participate in connection of the lymphatic endothelium to the surrounding extracellular matrix. Interacts with HSPA9. Interacts (via extracellular domain) with CD44; this interaction is required for PDPN-mediated directional migration and regulation of lamellipodia extension/stabilization during cell spreading and migration. Interacts (via cytoplasmic domain) with MSN and EZR; activates RHOA and promotes epithelial-mesenchymal transition. Interacts with CCL21; relocalized PDPN to the basolateral membrane. Extensively O-glycosylated. Contains sialic acid residues. O-glycosylation is necessary for platelet aggregation activity. Disialylated at Thr-52; sialic acid is critical for platelet-aggregating activity and for CLEC1B interaction. In terms of processing, phosphorylated by PKA; decreases cell migration. Post-translationally, the N-terminus is blocked. As to expression, detected at high levels in lung and brain, at lower levels in kidney, stomach, liver, spleen and esophagus, and not detected in skin and small intestine. Expressed in epithelial cells of choroid plexus, ependyma, glomerulus and alveolus, in mesothelial cells and in endothelia of lymphatic vessels. Also expressed in stromal cells of peripheral lymphoid tissue and thymic epithelial cells. Detected in carcinoma cell lines and cultured fibroblasts. Expressed at higher levels in colon carcinomas than in normal colon tissue.

It is found in the membrane. The protein localises to the cell projection. The protein resides in the lamellipodium membrane. Its subcellular location is the filopodium membrane. It localises to the microvillus membrane. It is found in the ruffle membrane. The protein localises to the membrane raft. The protein resides in the apical cell membrane. Its subcellular location is the basolateral cell membrane. It localises to the invadopodium. Functionally, mediates effects on cell migration and adhesion through its different partners. During development plays a role in blood and lymphatic vessels separation by binding CLEC1B, triggering CLEC1B activation in platelets and leading to platelet activation and/or aggregation. Interaction with CD9, on the contrary, attenuates platelet aggregation and pulmonary metastasis induced by PDPN. Mediates effects on cell migration and adhesion through its different partners. Through MSN or EZR interaction promotes epithelial-mesenchymal transition (EMT) leading to ERZ phosphorylation and triggering RHOA activation leading to cell migration increase and invasiveness. Interaction with CD44 promotes directional cell migration in epithelial and tumor cells. In lymph nodes (LNs), controls fibroblastic reticular cells (FRCs) adhesion to the extracellular matrix (ECM) and contraction of the actomyosin by maintaining ERM proteins (EZR; MSN and RDX) and MYL9 activation through association with unknown transmembrane proteins. Engagement of CLEC1B by PDPN promotes FRCs relaxation by blocking lateral membrane interactions leading to reduction of ERM proteins (EZR; MSN and RDX) and MYL9 activation. Through binding with LGALS8 may participate in connection of the lymphatic endothelium to the surrounding extracellular matrix. In keratinocytes, induces changes in cell morphology showing an elongated shape, numerous membrane protrusions, major reorganization of the actin cytoskeleton, increased motility and decreased cell adhesion. Controls invadopodia stability and maturation leading to efficient degradation of the extracellular matrix (ECM) in tumor cells through modulation of RHOC activity in order to activate ROCK1/ROCK2 and LIMK1/LIMK2 and inactivation of CFL1. Required for normal lung cell proliferation and alveolus formation at birth. Does not function as a water channel or as a regulator of aquaporin-type water channels. Does not have any effect on folic acid or amino acid transport. This Mus musculus (Mouse) protein is Podoplanin.